A 287-amino-acid chain; its full sequence is Oxaloacetate decarboxylase (287 aa).

Ser50 is a substrate binding site. A Mg(2+)-binding site is contributed by Asp88. Residues Arg159 and His235 each coordinate substrate.

This sequence belongs to the isocitrate lyase family. Oxaloacetate decarboxylase subfamily. As to quaternary structure, homotetramer; dimer of dimers. The cofactor is Mg(2+).

The enzyme catalyses oxaloacetate + H(+) = pyruvate + CO2. Catalyzes the decarboxylation of oxaloacetate into pyruvate. Seems to play a role in maintaining cellular concentrations of bicarbonate and pyruvate. The sequence is that of Oxaloacetate decarboxylase from Pseudomonas aeruginosa (strain LESB58).